A 164-amino-acid polypeptide reads, in one-letter code: Arginine repressor (164 aa).

It belongs to the ArgR family.

The protein resides in the cytoplasm. The protein operates within amino-acid biosynthesis; L-arginine biosynthesis [regulation]. Functionally, regulates arginine biosynthesis genes. The sequence is that of Arginine repressor from Mycobacterium avium (strain 104).